Reading from the N-terminus, the 104-residue chain is Large ribosomal subunit protein uL24 (104 aa).

This sequence belongs to the universal ribosomal protein uL24 family. As to quaternary structure, part of the 50S ribosomal subunit.

Functionally, one of two assembly initiator proteins, it binds directly to the 5'-end of the 23S rRNA, where it nucleates assembly of the 50S subunit. In terms of biological role, one of the proteins that surrounds the polypeptide exit tunnel on the outside of the subunit. The polypeptide is Large ribosomal subunit protein uL24 (Sodalis glossinidius (strain morsitans)).